Reading from the N-terminus, the 381-residue chain is Trans-enoyl reductase iliB (381 aa).

50–53 (VDGK) is a binding site for NADP(+). 145 to 152 (ATLATVGL) lines the substrate pocket. NADP(+) is bound by residues 213–216 (SPGS), Tyr-231, and 278–279 (LD). 298 to 302 (TYTQF) is a substrate binding site. 367-368 (IS) is a binding site for NADP(+).

It belongs to the zinc-containing alcohol dehydrogenase family. As to quaternary structure, monomer.

It carries out the reaction N-[(4E,6E,10S,12Z,14E)-6,10-dimethyl-3-oxohexadeca-4,6,12,14-tetraenoyl]-L-tyrosyl-[ACP] = (3E,5S)-3-[(2E,4E,8S,10E,12Z)-1-hydroxy-4,8-dimethyltetradeca-2,4,10,12-tetraen-1-ylidene]-5-[(4-hydroxyphenyl)methyl]pyrrolidine-2,4-dione + holo-[ACP] + H(+). It participates in mycotoxin biosynthesis. Its function is as follows. Trans-enoyl reductase; part of the gene cluster that mediates the biosynthesis of ilicicolin H, a 4-hydroxy-2-pyridonealkaloid that has potent and broad antifungal activities by inhibiting the mitochondrial respiration chain. IliB collaborates with the hybrid PKS-NRPS synthetase iliA to assemble the backbone of ilicicolin H. The PKS portion of iliA and trans-acting enoyl reductase iliB work together to construct an octaketide, and two methyl groups are introduced by the MT domain of iliA during the chain assembly. The nascent chain is then condensed with tyrosine, catalyzed by the iliA C domain, and the resulting PKS-NRPS hybrid is offloaded by the iliA RED domain to form an advanced tetramic acid intermediate. The biosynthesis of ilicicolin H starts with formation of the tetramic acid by the hybrid PKS-NRPS synthetase iliA with the partnering trans-enoyl reductase iliB since iliA lacks a designated enoylreductase (ER) domain. The cytochrome P450 monooxygenase iliC then catalyzes the ring expansion of the tetramate to the acyclic 2-pyridone. The pericyclase iliD further converts the acyclic 2-pyridone into 8-epi-ilicicolin H. 8-epi-ilicicolin H might then spontaneously convert to ilicicolin H since ilicicolin H is produced in the absence of the epimerase iliE, in contrast to what was observed for the Talaromyces variabilis ilicolin H biosynthetic pathway. This Neonectria sp. (strain DH2) protein is Trans-enoyl reductase iliB.